We begin with the raw amino-acid sequence, 343 residues long: Nicotianamine synthase 3 (343 aa).

It belongs to the nicotianamine synthase (NAS)-like family. In terms of tissue distribution, expressed in leaves.

It catalyses the reaction 3 S-adenosyl-L-methionine = nicotianamine + 3 S-methyl-5'-thioadenosine + 3 H(+). Functionally, synthesizes nicotianamine, a polyamine that is the first intermediate in the synthesis of the phytosiderophores of the mugineic acid type found in gramineae which serve as a sensor for the physiological iron status within the plant, and/or might be involved in the transport of iron. This is Nicotianamine synthase 3 (NAS3) from Oryza sativa subsp. indica (Rice).